The primary structure comprises 75 residues: MATKPFFRRRKVCPFSGDNAPKIDYKDVRLLQRYISERGKIVPARITAVSAKKQRELAQAIKRARFLALLPYAVK.

This sequence belongs to the bacterial ribosomal protein bS18 family. As to quaternary structure, part of the 30S ribosomal subunit. Forms a tight heterodimer with protein bS6.

Its function is as follows. Binds as a heterodimer with protein bS6 to the central domain of the 16S rRNA, where it helps stabilize the platform of the 30S subunit. This Rhodobacter capsulatus (strain ATCC BAA-309 / NBRC 16581 / SB1003) protein is Small ribosomal subunit protein bS18 (rbsR).